A 95-amino-acid chain; its full sequence is YcgL domain-containing protein Sden_1630 (95 aa).

Positions 1–85 constitute a YcgL domain; that stretch reads MICTVYKSRR…PKANLLEEHK (85 aa).

The protein is YcgL domain-containing protein Sden_1630 of Shewanella denitrificans (strain OS217 / ATCC BAA-1090 / DSM 15013).